The sequence spans 1024 residues: Gamma-tubulin complex component 5 (1024 aa).

Disordered regions lie at residues 155-203 and 521-545; these read IGPY…LDPC and TENEEKMSDNASASSGSDQGPSSRQ. The segment covering 189-203 has biased composition (basic and acidic residues); that stretch reads TPLEEQDQNRKLDPC. Over residues 531 to 543 the composition is skewed to low complexity; it reads ASASSGSDQGPSS.

This sequence belongs to the TUBGCP family. In terms of assembly, component of the gamma-tubulin ring complex (gTuRC) consisting of TUBGCP2, TUBGCP3, TUBGCP4, TUBGCP5 and TUBGCP6 and gamma-tubulin TUBG1 or TUBG2. TUBGCP2, TUBGCP3, TUBGCP4, TUBGCP5 and TUBGCP6 assemble in a 5:5:2:1:1 stoichiometry; each is associated with a gamma-tubulin, thereby arranging 14 gamma-tubulins in a helical manner. Gamma-tubulin at the first position is blocked by TUBGCP3 at the last position, allowing 13 protafilaments to grow into a microtubule. The gTuRC (via TUBGCP3 and TUBGCP6) interacts with ACTB and MZT1; the interactions form a luminal bridge that stabilizes the initial structure during complex assembly. The gTuRC (via TUBGCP2) interacts with MZT2A/MZT2B and CDK5RAP2 (via CM1 motif); the interactions play a role in gTuRC activation. In terms of tissue distribution, widely expressed, with highest levels in heart and skeletal muscle and moderate levels in brain.

The protein resides in the cytoplasm. It localises to the cytoskeleton. The protein localises to the microtubule organizing center. It is found in the centrosome. In terms of biological role, component of the gamma-tubulin ring complex (gTuRC) which mediates microtubule nucleation. The gTuRC regulates the minus-end nucleation of alpha-beta tubulin heterodimers that grow into microtubule protafilaments, a critical step in centrosome duplication and spindle formation. In Homo sapiens (Human), this protein is Gamma-tubulin complex component 5 (TUBGCP5).